Reading from the N-terminus, the 304-residue chain is UDP-N-acetylenolpyruvoylglucosamine reductase (304 aa).

An FAD-binding PCMH-type domain is found at 33 to 198 (RVGGPADILV…IEATVELESG (166 aa)). Residue arginine 177 is part of the active site. Serine 227 acts as the Proton donor in catalysis. Glutamate 297 is an active-site residue.

Belongs to the MurB family. FAD is required as a cofactor.

It localises to the cytoplasm. The enzyme catalyses UDP-N-acetyl-alpha-D-muramate + NADP(+) = UDP-N-acetyl-3-O-(1-carboxyvinyl)-alpha-D-glucosamine + NADPH + H(+). It functions in the pathway cell wall biogenesis; peptidoglycan biosynthesis. Its function is as follows. Cell wall formation. This Clostridium perfringens (strain ATCC 13124 / DSM 756 / JCM 1290 / NCIMB 6125 / NCTC 8237 / Type A) protein is UDP-N-acetylenolpyruvoylglucosamine reductase.